The following is a 186-amino-acid chain: Chromosomal replication initiator protein DnaA (186 aa).

Residue Glu-1 is a region of interest, domain I, interacts with DnaA modulators. Position 1 (Glu-1) is a region of interest, domain II. Positions 1–99 (EFFKTFNALI…GALNKVTHTS (99 aa)) are domain III, AAA+ region. Positions 100–186 (LIGRSMTVES…GRNFGGRDHT (87 aa)) are domain IV, binds dsDNA.

This sequence belongs to the DnaA family. In terms of assembly, oligomerizes as a right-handed, spiral filament on DNA at oriC.

The protein resides in the cytoplasm. Plays an essential role in the initiation and regulation of chromosomal replication. ATP-DnaA binds to the origin of replication (oriC) to initiate formation of the DNA replication initiation complex once per cell cycle. Binds the DnaA box (a 9 base pair repeat at the origin) and separates the double-stranded (ds)DNA. Forms a right-handed helical filament on oriC DNA; dsDNA binds to the exterior of the filament while single-stranded (ss)DNA is stabiized in the filament's interior. The ATP-DnaA-oriC complex binds and stabilizes one strand of the AT-rich DNA unwinding element (DUE), permitting loading of DNA polymerase. After initiation quickly degrades to an ADP-DnaA complex that is not apt for DNA replication. Binds acidic phospholipids. In Wolbachia sp, this protein is Chromosomal replication initiator protein DnaA.